A 118-amino-acid polypeptide reads, in one-letter code: MQAKAILRHTPTSPRKMRIVAGLIRGKQVDQAKAILLNSTKAASRQVIQTLKSAVANYAQLNPEDRAGDNELVVKTIFVDEGPTIKRMLPAPMGRAYRIRKRSNHLTIVVDKGNPVKK.

The protein belongs to the universal ribosomal protein uL22 family. In terms of assembly, part of the 50S ribosomal subunit.

Functionally, this protein binds specifically to 23S rRNA; its binding is stimulated by other ribosomal proteins, e.g. L4, L17, and L20. It is important during the early stages of 50S assembly. It makes multiple contacts with different domains of the 23S rRNA in the assembled 50S subunit and ribosome. Its function is as follows. The globular domain of the protein is located near the polypeptide exit tunnel on the outside of the subunit, while an extended beta-hairpin is found that lines the wall of the exit tunnel in the center of the 70S ribosome. The sequence is that of Large ribosomal subunit protein uL22 from Prosthecochloris aestuarii (strain DSM 271 / SK 413).